The chain runs to 546 residues: Cholesterol oxidase (546 aa).

The tat-type signal signal peptide spans Met-1–Ala-42. Residues Tyr-57, Gly-58, Glu-77, Gly-152, Asn-156, Gly-157, Met-159, and Val-287 each contribute to the FAD site. Residues Glu-398 and His-484 each act as proton acceptor in the active site. Gly-512 and Phe-524 together coordinate FAD.

Belongs to the GMC oxidoreductase family. In terms of assembly, monomer. It depends on FAD as a cofactor. Post-translationally, predicted to be exported by the Tat system. The position of the signal peptide cleavage has been experimentally proven.

It is found in the secreted. It carries out the reaction cholesterol + O2 = cholest-5-en-3-one + H2O2. The catalysed reaction is cholest-5-en-3-one = cholest-4-en-3-one. It functions in the pathway steroid metabolism; cholesterol degradation. Its function is as follows. Bifunctional enzyme that catalyzes the oxidation and isomerization of cholesterol to cholestenone (cholest-4-en-3-one), an initial step in the cholesterol degradation process. The cholesterol degradation pathway allows the bacterium to utilize cholesterol as its sole source of carbon and energy. The chain is Cholesterol oxidase from Streptomyces sp. (strain SA-COO).